Consider the following 186-residue polypeptide: Intraflagellar transport protein 27 homolog (186 aa).

Residues 12 to 19 (GDPAVGKT), 64 to 68 (DSAGK), and 123 to 126 (NKTD) each bind GTP.

Belongs to the small GTPase superfamily. Rab family. In terms of assembly, component of the IFT complex B, at least composed of IFT20, IFT25, IFT27, IFT52, IFT57, IFT74, IFT81, IFT88 and TRAF3IP1. Interacts with IFT25. Interacts with IFT70B. Interacts with RABL2/RABL2A; binding is equal in the presence of GTP or GDP. Interacts with ARL6; recognizes and binds with the GTP-free form of ARL6.

The protein resides in the cell projection. Its subcellular location is the cilium. It localises to the cytoplasm. The protein localises to the flagellum. Its function is as follows. Small GTPase-like component of the intraflagellar transport (IFT) complex B that promotes the exit of the BBSome complex from cilia via its interaction with ARL6. Not involved in entry of the BBSome complex into cilium. Prevents aggregation of GTP-free ARL6. Required for hedgehog signaling. Forms a subcomplex within the IFT complex B with IFT25. Its role in intraflagellar transport is mainly seen in tissues rich in ciliated cells such as kidney and testis. Essential for male fertility, spermiogenesis and sperm flagella formation. Plays a role in the early development of the kidney. May be involved in the regulation of ureteric bud initiation. This Homo sapiens (Human) protein is Intraflagellar transport protein 27 homolog (IFT27).